The sequence spans 182 residues: Small ribosomal subunit protein uS4c (182 aa).

An S4 RNA-binding domain is found at 82–143 (MRLDNILFRL…KQRSKALIQN (62 aa)).

Belongs to the universal ribosomal protein uS4 family. As to quaternary structure, part of the 30S ribosomal subunit. Contacts protein S5. The interaction surface between S4 and S5 is involved in control of translational fidelity.

It is found in the plastid. The protein localises to the chloroplast. In terms of biological role, one of the primary rRNA binding proteins, it binds directly to 16S rRNA where it nucleates assembly of the body of the 30S subunit. Its function is as follows. With S5 and S12 plays an important role in translational accuracy. The sequence is that of Small ribosomal subunit protein uS4c (rps4) from Libertia formosa (Snowy mermaid).